Here is a 270-residue protein sequence, read N- to C-terminus: GTP cyclohydrolase FolE2 2 (270 aa).

Belongs to the GTP cyclohydrolase IV family.

The enzyme catalyses GTP + H2O = 7,8-dihydroneopterin 3'-triphosphate + formate + H(+). The protein operates within cofactor biosynthesis; 7,8-dihydroneopterin triphosphate biosynthesis; 7,8-dihydroneopterin triphosphate from GTP: step 1/1. Functionally, converts GTP to 7,8-dihydroneopterin triphosphate. This Dechloromonas aromatica (strain RCB) protein is GTP cyclohydrolase FolE2 2.